The chain runs to 435 residues: Zinc finger CCCH domain-containing protein 17 (435 aa).

2 disordered regions span residues 1–30 (MDIE…SSTS) and 58–107 (TAKR…GPRH). A C3H1-type 1 zinc finger spans residues 28 to 54 (STSGKVCIHWRAGRCNRFPCPYLHSEL). The segment covering 77 to 103 (SGGGGGRGAGGAGGPNKWGRGPGGADG) has biased composition (gly residues). The C3H1-type 2 zinc finger occupies 108–135 (KVPDRPCRYFLAGDCSYGEKCRYPHSYS). WD repeat units follow at residues 148–189 (GHEK…GVIN), 191–225 (GREI…EMNL), 227–264 (GPTG…NGFE), 271–308 (GHQL…CIQT), 311–348 (DHTG…SLEV), 355–395 (EHGA…DRGR), and 397–435 (FSKQ…SQTK).

The chain is Zinc finger CCCH domain-containing protein 17 from Oryza sativa subsp. japonica (Rice).